The primary structure comprises 159 residues: Large ribosomal subunit protein bL35c (159 aa).

The N-terminal 86 residues, 1–86 (MAMASATATL…TSSPSFTVFA (86 aa)), are a transit peptide targeting the chloroplast.

In terms of assembly, component of the chloroplast large ribosomal subunit (LSU). Mature 70S chloroplast ribosomes of higher plants consist of a small (30S) and a large (50S) subunit. The 30S small subunit contains 1 molecule of ribosomal RNA (16S rRNA) and 24 different proteins. The 50S large subunit contains 3 rRNA molecules (23S, 5S and 4.5S rRNA) and 33 different proteins.

Its subcellular location is the plastid. It is found in the chloroplast. Component of the chloroplast ribosome (chloro-ribosome), a dedicated translation machinery responsible for the synthesis of chloroplast genome-encoded proteins, including proteins of the transcription and translation machinery and components of the photosynthetic apparatus. The protein is Large ribosomal subunit protein bL35c (RPL35) of Spinacia oleracea (Spinach).